A 426-amino-acid chain; its full sequence is Phosphoribosylamine--glycine ligase (426 aa).

One can recognise an ATP-grasp domain in the interval 107 to 313 (KDFMQKYGVK…FLNVINSALN (207 aa)). 133 to 194 (LDKISYPVVI…EEFLDGVEIS (62 aa)) is an ATP binding site. Residues Glu-283 and Asn-285 each coordinate Mg(2+).

It belongs to the GARS family. Mg(2+) is required as a cofactor. Requires Mn(2+) as cofactor.

The catalysed reaction is 5-phospho-beta-D-ribosylamine + glycine + ATP = N(1)-(5-phospho-beta-D-ribosyl)glycinamide + ADP + phosphate + H(+). The protein operates within purine metabolism; IMP biosynthesis via de novo pathway; N(1)-(5-phospho-D-ribosyl)glycinamide from 5-phospho-alpha-D-ribose 1-diphosphate: step 2/2. The sequence is that of Phosphoribosylamine--glycine ligase from Fusobacterium nucleatum subsp. nucleatum (strain ATCC 25586 / DSM 15643 / BCRC 10681 / CIP 101130 / JCM 8532 / KCTC 2640 / LMG 13131 / VPI 4355).